The primary structure comprises 78 residues: Acyl carrier protein (78 aa).

The 75-residue stretch at 4–78 (AQIKEKVYDI…QQAIDYIVKK (75 aa)) folds into the Carrier domain. Serine 39 bears the O-(pantetheine 4'-phosphoryl)serine mark.

This sequence belongs to the acyl carrier protein (ACP) family. 4'-phosphopantetheine is transferred from CoA to a specific serine of apo-ACP by AcpS. This modification is essential for activity because fatty acids are bound in thioester linkage to the sulfhydryl of the prosthetic group.

Its subcellular location is the cytoplasm. The protein operates within lipid metabolism; fatty acid biosynthesis. Functionally, carrier of the growing fatty acid chain in fatty acid biosynthesis. In Chlorobium phaeobacteroides (strain DSM 266 / SMG 266 / 2430), this protein is Acyl carrier protein.